A 189-amino-acid chain; its full sequence is Elongation factor P 2 (189 aa).

The protein belongs to the elongation factor P family.

It localises to the cytoplasm. The protein operates within protein biosynthesis; polypeptide chain elongation. Involved in peptide bond synthesis. Stimulates efficient translation and peptide-bond synthesis on native or reconstituted 70S ribosomes in vitro. Probably functions indirectly by altering the affinity of the ribosome for aminoacyl-tRNA, thus increasing their reactivity as acceptors for peptidyl transferase. This Lactobacillus acidophilus (strain ATCC 700396 / NCK56 / N2 / NCFM) protein is Elongation factor P 2.